A 281-amino-acid polypeptide reads, in one-letter code: sn-glycerol-3-phosphate transport system permease protein UgpE (281 aa).

6 helical membrane-spanning segments follow: residues 16-36, 85-105, 113-133, 142-162, 202-222, and 247-267; these read LILGIAVILFPLYVAFVAATL, FSITLGKITVSMLSAFAIVWF, FFWMIFITLMLPVEVRIFPTV, LDSYAGLTLPLMASATATFLF, ALFVITFIYGWNQYLWPLLII, and WNSVMAAMLLTLIPPVVIVLV. An ABC transmembrane type-1 domain is found at 77-268; it reads LLNSFVMAFS…IPPVVIVLVM (192 aa).

This sequence belongs to the binding-protein-dependent transport system permease family. UgpAE subfamily. The complex is composed of two ATP-binding proteins (UgpC), two transmembrane proteins (UgpA and UgpE) and a solute-binding protein (UgpB).

The protein resides in the cell inner membrane. Its function is as follows. Part of the ABC transporter complex UgpBAEC involved in sn-glycerol-3-phosphate (G3P) import. Probably responsible for the translocation of the substrate across the membrane. The polypeptide is sn-glycerol-3-phosphate transport system permease protein UgpE (ugpE) (Escherichia coli O157:H7).